Reading from the N-terminus, the 90-residue chain is Aminoacyl carrier protein 1 (90 aa).

One can recognise a Carrier domain in the interval 6–84 (TDVRNRIIKL…TLERMVMTQL (79 aa)). S42 carries the O-(pantetheine 4'-phosphoryl)serine modification.

In terms of processing, 4'-phosphopantetheine is transferred from CoA to a specific serine of the apo-form of this carrier protein.

Aminoacyl carrier protein. Can be charged with L-glycine via the formation of a thioester bond between the amino acid and the 4'-phosphopantetheinyl prosthetic group, catalyzed by the bll0957 ligase. The chain is Aminoacyl carrier protein 1 from Bradyrhizobium diazoefficiens (strain JCM 10833 / BCRC 13528 / IAM 13628 / NBRC 14792 / USDA 110).